The chain runs to 172 residues: Adenine phosphoribosyltransferase (172 aa).

Belongs to the purine/pyrimidine phosphoribosyltransferase family. As to quaternary structure, homodimer.

The protein resides in the cytoplasm. It catalyses the reaction AMP + diphosphate = 5-phospho-alpha-D-ribose 1-diphosphate + adenine. The protein operates within purine metabolism; AMP biosynthesis via salvage pathway; AMP from adenine: step 1/1. In terms of biological role, catalyzes a salvage reaction resulting in the formation of AMP, that is energically less costly than de novo synthesis. The polypeptide is Adenine phosphoribosyltransferase (Rippkaea orientalis (strain PCC 8801 / RF-1) (Cyanothece sp. (strain PCC 8801))).